We begin with the raw amino-acid sequence, 430 residues long: 3-phosphoshikimate 1-carboxyvinyltransferase (430 aa).

Residues Lys-20, Ser-21, and Arg-25 each coordinate 3-phosphoshikimate. Phosphoenolpyruvate is bound at residue Lys-20. Positions 92 and 120 each coordinate phosphoenolpyruvate. Ser-166, Gln-168, Asp-312, and Lys-339 together coordinate 3-phosphoshikimate. Gln-168 provides a ligand contact to phosphoenolpyruvate. Catalysis depends on Asp-312, which acts as the Proton acceptor. Residues Arg-343 and Arg-387 each contribute to the phosphoenolpyruvate site.

The protein belongs to the EPSP synthase family. Monomer.

It localises to the cytoplasm. The catalysed reaction is 3-phosphoshikimate + phosphoenolpyruvate = 5-O-(1-carboxyvinyl)-3-phosphoshikimate + phosphate. It participates in metabolic intermediate biosynthesis; chorismate biosynthesis; chorismate from D-erythrose 4-phosphate and phosphoenolpyruvate: step 6/7. In terms of biological role, catalyzes the transfer of the enolpyruvyl moiety of phosphoenolpyruvate (PEP) to the 5-hydroxyl of shikimate-3-phosphate (S3P) to produce enolpyruvyl shikimate-3-phosphate and inorganic phosphate. This Lactococcus lactis subsp. cremoris (strain SK11) protein is 3-phosphoshikimate 1-carboxyvinyltransferase.